We begin with the raw amino-acid sequence, 106 residues long: UPF0060 membrane protein Smed_0659 (106 aa).

The next 3 helical transmembrane spans lie at 4 to 24 (FAIY…FWAW), 31 to 51 (GLWL…LTMV), and 61 to 81 (AAYG…AEGA).

Belongs to the UPF0060 family.

It is found in the cell inner membrane. The sequence is that of UPF0060 membrane protein Smed_0659 from Sinorhizobium medicae (strain WSM419) (Ensifer medicae).